Consider the following 315-residue polypeptide: WD repeat domain-containing protein 83 (315 aa).

WD repeat units follow at residues 23–62 (CSQG…LLRT), 65–104 (GHGY…VVRK), 107–146 (GHAG…PEPV), 151–188 (EARD…VSSD), 190–228 (VGSP…LLGE), 231–272 (GHKN…LALA), and 275–313 (VGSN…AEGG).

This sequence belongs to the WD repeat MORG1 family. As to quaternary structure, interacts with EGLN3/PHD3. Interacts with ERK signaling proteins MAP2K1/MEK1, MAP2K2/MEK2, LAMTOR3, ARAF/Raf-1, MAPK1/ERK2 and MAPK3/ERK1. Identified in the spliceosome C complex. Interacts with PARD6B and CRB3. Interacts strongly with GTP-bound RRAGA but not with inactive GDP-bound. Interacts with p62/SQSTM1. Ubiquitous.

It localises to the cytoplasm. The protein resides in the lysosome. It is found in the nucleus. Its function is as follows. Molecular scaffold protein for various multimeric protein complexes. Acts as a module in the assembly of a multicomponent scaffold for the ERK pathway, linking ERK responses to specific agonists. At low concentrations it enhances ERK activation, whereas high concentrations lead to the inhibition of ERK activation. Also involved in response to hypoxia by acting as a negative regulator of HIF1A/HIF-1-alpha via its interaction with EGLN3/PHD3. May promote degradation of HIF1A. May act by recruiting signaling complexes to a specific upstream activator. May also be involved in pre-mRNA splicing. Participates in tight junction development by regulating apico-basal polarity, a key step in tissue development and organization. Mechanistically, regulates the translocation of PAR6-aPKC from the cytoplasm to the apical surface by acting as an adapter between PARD6B AND CRB3. Also acts as a negative regulator of mTORC1 under nutrient-rich conditions by binding to the active Rag GTPases to inhibit mTORC1 localization to the lysosome and phosphorylation of downstream targets. This facilitates constitutive basal autophagy during nutrient availability. In Mus musculus (Mouse), this protein is WD repeat domain-containing protein 83 (Wdr83).